A 132-amino-acid chain; its full sequence is Probable histone H2A.1 (132 aa).

The tract at residues 1–22 (MAGRGKTLGSGSAKKATTRSSK) is disordered.

Belongs to the histone H2A family. As to quaternary structure, the nucleosome is a histone octamer containing two molecules each of H2A, H2B, H3 and H4 assembled in one H3-H4 heterotetramer and two H2A-H2B heterodimers. The octamer wraps approximately 147 bp of DNA. In terms of processing, not ubiquitinated. Low level of expression; mainly in roots. Found in the root cap cells and in non dividing tissues of the plant, including the root elongation and maturation zones and the leaf veins.

The protein localises to the nucleus. Its subcellular location is the chromosome. Core component of nucleosome. Nucleosomes wrap and compact DNA into chromatin, limiting DNA accessibility to the cellular machineries which require DNA as a template. Histones thereby play a central role in transcription regulation, DNA repair, DNA replication and chromosomal stability. DNA accessibility is regulated via a complex set of post-translational modifications of histones, also called histone code, and nucleosome remodeling. In Arabidopsis thaliana (Mouse-ear cress), this protein is Probable histone H2A.1.